Here is an 800-residue protein sequence, read N- to C-terminus: Phenylalanine--tRNA ligase beta subunit (800 aa).

The tRNA-binding domain occupies 39-154 (SKDIKNLVVG…TEVEPGTDAL (116 aa)). Residues 408 to 483 (SFVTPIDITA…RIYGYDEIPS (76 aa)) enclose the B5 domain. 4 residues coordinate Mg(2+): D461, D467, E470, and E471. In terms of domain architecture, FDX-ACB spans 708-800 (PKFPGVTRDI…ALQAQGATIR (93 aa)).

It belongs to the phenylalanyl-tRNA synthetase beta subunit family. Type 1 subfamily. Tetramer of two alpha and two beta subunits. Mg(2+) serves as cofactor.

Its subcellular location is the cytoplasm. The enzyme catalyses tRNA(Phe) + L-phenylalanine + ATP = L-phenylalanyl-tRNA(Phe) + AMP + diphosphate + H(+). This chain is Phenylalanine--tRNA ligase beta subunit, found in Staphylococcus haemolyticus (strain JCSC1435).